The sequence spans 337 residues: Fructose-1,6-bisphosphatase class 1 (337 aa).

4 residues coordinate Mg(2+): E94, D116, L118, and D119. Residues 119 to 122 (DGSS), N210, and K276 each bind substrate. A Mg(2+)-binding site is contributed by E282.

The protein belongs to the FBPase class 1 family. As to quaternary structure, homotetramer. Mg(2+) serves as cofactor.

The protein localises to the cytoplasm. The enzyme catalyses beta-D-fructose 1,6-bisphosphate + H2O = beta-D-fructose 6-phosphate + phosphate. It functions in the pathway carbohydrate biosynthesis; gluconeogenesis. The sequence is that of Fructose-1,6-bisphosphatase class 1 from Burkholderia orbicola (strain MC0-3).